The following is a 501-amino-acid chain: MRLSPSFLSLALVIFVGEVVARNVVARASNPASVTGTRKVSLLKNVAGLPAVPTAQQVAVSSLNTDDIQGDILVGMHKQQQRFYFFTINDAATFKTHLAADIAPVVASVTQLSSVSTQPLVALNIAFSQTGLNALGVTDNVGDALFTAGQASNTVGNLKETTDNWVAQFKTPGIHGVILLASDDKSLIDQQEASIQSTFGAAISKVYSLDGAIRPGAEAGHEMFGFLDGIAQPAISGLGTPLPGQLVVDEGVIIVGGTNDPIARPADGWMTGGSFLAFRQLEQLVPEFNKYLLDNAPAVDGKSLQDRADLLGARMVGRWKSGAPIDLTPLADDPALGADPQRNNNFDFTHANFSITTDQTHCPFSAHIRKTRPRADLVAPANSIIRSGIPYGSEVSAAEAAANATTNERGLAFVSYQSQLNKGFQFLQNTWANNPGFIFGKNVQPGQDPIIGQNSGAIRSVVGLDPANPTGALSMGQFVVSRGGEYFFSPPISALTGKLAA.

The first 21 residues, 1–21, serve as a signal peptide directing secretion; it reads MRLSPSFLSLALVIFVGEVVA. Residues 22–60 constitute a propeptide that is removed on maturation; sequence RNVVARASNPASVTGTRKVSLLKNVAGLPAVPTAQQVAV. The active-site Proton acceptor is the Asp-228. A glycan (N-linked (GlcNAc...) asparagine) is linked at Asn-352. His-367 lines the heme pocket. An N-linked (GlcNAc...) asparagine glycan is attached at Asn-403.

This sequence belongs to the DyP-type peroxidase family. Heme b is required as a cofactor.

It localises to the secreted. The enzyme catalyses Reactive Blue 5 + 2 H2O2 = 2,2'-disulfonyl azobenzene + 3-[(4-amino-6-chloro-1,3,5-triazin-2-yl)amino]benzenesulfonate + phthalate + 2 H2O + 2 H(+). The catalysed reaction is 2 a phenolic donor + H2O2 = 2 a phenolic radical donor + 2 H2O. Its function is as follows. Manganese-independent peroxidase that is able to convert a large number of compounds, but its physiological substrate is not known. In addition to classic peroxidase substrates (e.g. 2,6-dimethoxyphenol), oxidizes dyes such as Reactive Blue 5 and Reactive Black 5. This Exidia glandulosa (Black witch's butter) protein is Dye-decolorizing peroxidase.